The chain runs to 126 residues: Small ribosomal subunit protein uS13 (126 aa).

A disordered region spans residues 99 to 126; sequence LRGQSTKNNARTRKGKKKTVANKKKATK. Residues 108–126 are compositionally biased toward basic residues; the sequence is ARTRKGKKKTVANKKKATK.

Belongs to the universal ribosomal protein uS13 family. Part of the 30S ribosomal subunit. Forms a loose heterodimer with protein S19. Forms two bridges to the 50S subunit in the 70S ribosome.

Located at the top of the head of the 30S subunit, it contacts several helices of the 16S rRNA. In the 70S ribosome it contacts the 23S rRNA (bridge B1a) and protein L5 of the 50S subunit (bridge B1b), connecting the 2 subunits; these bridges are implicated in subunit movement. Contacts the tRNAs in the A and P-sites. This is Small ribosomal subunit protein uS13 from Porphyromonas gingivalis (strain ATCC 33277 / DSM 20709 / CIP 103683 / JCM 12257 / NCTC 11834 / 2561).